A 97-amino-acid chain; its full sequence is Eotaxin (97 aa).

Positions 1-23 (MQLSTALLFLLLTATSFTSQVLA) are cleaved as a signal peptide. 2 disulfides stabilise this stretch: Cys-32-Cys-57 and Cys-33-Cys-73. The O-linked (GalNAc...) threonine glycan is linked to Thr-94.

It belongs to the intercrine beta (chemokine CC) family.

It is found in the secreted. Functionally, in response to the presence of allergens, this protein directly promotes the accumulation of eosinophils (a prominent feature of allergic inflammatory reactions), but not lymphocytes, macrophages or neutrophils. Binds to CCR3. The chain is Eotaxin (Ccl11) from Rattus norvegicus (Rat).